A 175-amino-acid polypeptide reads, in one-letter code: NADH-quinone oxidoreductase subunit I (175 aa).

2 4Fe-4S ferredoxin-type domains span residues 69 to 98 and 115 to 144; these read KRDEQGRERCTACFCCMWICPANAIHIEAA and KKFEINLLRCIFCGLCEEACPKGAIYLDGT. Residues cysteine 78, cysteine 81, cysteine 84, cysteine 88, cysteine 124, cysteine 127, cysteine 130, and cysteine 134 each contribute to the [4Fe-4S] cluster site.

This sequence belongs to the complex I 23 kDa subunit family. NDH-1 is composed of 14 different subunits. Subunits NuoA, H, J, K, L, M, N constitute the membrane sector of the complex. [4Fe-4S] cluster serves as cofactor.

Its subcellular location is the cell inner membrane. It carries out the reaction a quinone + NADH + 5 H(+)(in) = a quinol + NAD(+) + 4 H(+)(out). In terms of biological role, NDH-1 shuttles electrons from NADH, via FMN and iron-sulfur (Fe-S) centers, to quinones in the respiratory chain. The immediate electron acceptor for the enzyme in this species is believed to be ubiquinone. Couples the redox reaction to proton translocation (for every two electrons transferred, four hydrogen ions are translocated across the cytoplasmic membrane), and thus conserves the redox energy in a proton gradient. The sequence is that of NADH-quinone oxidoreductase subunit I from Leptospira biflexa serovar Patoc (strain Patoc 1 / Ames).